A 218-amino-acid chain; its full sequence is Ras-related protein Rab-11B (218 aa).

Gly-2 carries the post-translational modification N-acetylglycine. Arg-4 carries the post-translational modification Citrulline. 11 residues coordinate GTP: Ser-20, Gly-21, Gly-23, Lys-24, Ser-25, Asn-26, Asn-37, Leu-38, Ser-40, Ser-42, and Thr-43. Residue Ser-25 participates in Mg(2+) binding. Positions 36 to 47 (FNLESKSTIGVE) match the Switch 1 motif. Residues Thr-43 and Asp-66 each coordinate Mg(2+). The Switch 2 signature appears at 67–86 (TAGQERYRAITSAYYRGAVG). Gly-69, Asn-124, Lys-125, Asp-127, Ala-155, and Leu-156 together coordinate GTP. Positions 184–218 (RAAHDESPGNNVVDISVPPTTDGQRPNKLQCCQSL) are disordered. 2 S-geranylgeranyl cysteine lipidation sites follow: Cys-214 and Cys-215. Cys-215 carries the post-translational modification Cysteine methyl ester. A propeptide spans 216–218 (QSL) (removed in mature form).

This sequence belongs to the small GTPase superfamily. Rab family. Interacts with KCNMA1. Interacts with RAB11FIP1, RAB11FIP2, RAB11FIP3 and RAB11FIP4. May interact with TBC1D14. Interacts with ATP6V1E1. Interacts with PI4KB. Interacts (GDP-bound form) with ZFYVE27. Interacts (GDP-bound form) with KIF5A in a ZFYVE27-dependent manner. Interacts with RELCH. Interacts (in GTP-bound form) with TBC1D8B (via domain Rab-GAP TBC). Forms a complex containing RAB11B, ASAP1, Rabin8/RAB3IP, RAP11FIP3 and ARF4. Interacts with WDR44. Requires Mg(2+) as cofactor. Post-translationally, citrullinated by PADI4. As to expression, abundantly expressed in brain, heart and testis. Also detected in kidney and pancreatic islets.

The protein localises to the recycling endosome membrane. The protein resides in the cytoplasmic vesicle. It localises to the secretory vesicle. It is found in the synaptic vesicle membrane. Its subcellular location is the phagosome membrane. The enzyme catalyses GTP + H2O = GDP + phosphate + H(+). Regulated by guanine nucleotide exchange factors (GEFs) which promote the exchange of bound GDP for free GTP. Regulated by GTPase activating proteins (GAPs) which increase the GTP hydrolysis activity. Inhibited by GDP dissociation inhibitors (GDIs) which prevent Rab-GDP dissociation. Functionally, the small GTPases Rab are key regulators of intracellular membrane trafficking, from the formation of transport vesicles to their fusion with membranes. Rabs cycle between an inactive GDP-bound form and an active GTP-bound form that is able to recruit to membranes different set of downstream effectors directly responsible for vesicle formation, movement, tethering and fusion. The small Rab GTPase RAB11B plays a role in endocytic recycling, regulating apical recycling of several transmembrane proteins including cystic fibrosis transmembrane conductance regulator/CFTR, epithelial sodium channel/ENaC, potassium voltage-gated channel, and voltage-dependent L-type calcium channel. May also regulate constitutive and regulated secretion, like insulin granule exocytosis. Required for melanosome transport and release from melanocytes. Also regulates V-ATPase intracellular transport in response to extracellular acidosis. Promotes Rabin8/RAB3IP preciliary vesicular trafficking to mother centriole by forming a ciliary targeting complex containing Rab11, ASAP1, Rabin8/RAB3IP, RAB11FIP3 and ARF4, thereby regulating ciliogenesis initiation. On the contrary, upon LPAR1 receptor signaling pathway activation, interaction with phosphorylated WDR44 prevents Rab11-RAB3IP-RAB11FIP3 complex formation and cilia growth. The sequence is that of Ras-related protein Rab-11B from Mus musculus (Mouse).